The following is a 463-amino-acid chain: Type IV secretion system protein PtlD homolog (463 aa).

An N-terminal signal peptide occupies residues 1–24 (MAGLSRILLSCTLACLLAGQAAQA). A run of 5 helical transmembrane segments spans residues 118 to 138 (LQPL…YALL), 232 to 252 (WLLC…LAAS), 253 to 273 (LLIV…LFLV), 294 to 314 (ALVF…VLAG), and 333 to 353 (MLAA…VPLA). Residues 376 to 410 (AHRQAAARQYAPRPAAAAAAAGPHQAGTYAASATP) are compositionally biased toward low complexity. The disordered stretch occupies residues 376-463 (AHRQAAARQY…RVLPRKPNLP (88 aa)). Residues 411–420 (APAPARPAPS) are compositionally biased toward pro residues. Residues 441 to 455 (VRRDDRPAPAPDRRV) are compositionally biased toward basic and acidic residues.

It localises to the cell membrane. This chain is Type IV secretion system protein PtlD homolog (ptlD), found in Bordetella parapertussis (strain 12822 / ATCC BAA-587 / NCTC 13253).